Here is a 991-residue protein sequence, read N- to C-terminus: Receptor-like protein kinase HAIKU2 (991 aa).

A signal peptide spans 1–19 (MLRLLFIVRLLFLMPLASS). The Extracellular segment spans residues 20–616 (RSNHSEEVEN…KRKHLSKVDM (597 aa)). The N-linked (GlcNAc...) asparagine glycan is linked to asparagine 22. LRR repeat units follow at residues 66 to 90 (DGNV…RFTD), 99 to 123 (LKLL…LGKC), 125 to 148 (RLRY…SLQL), 150 to 170 (EFLS…SLKD), 171 to 196 (LKRL…ILNL), 197 to 220 (TALQ…IKNL), 221 to 244 (VRLQ…IVQL), 246 to 267 (NLRQ…GFRN), 269 to 291 (TNLR…LRFL), 292 to 314 (KNLV…EFGD), 315 to 339 (FKSL…LGSW), 341 to 363 (AFKY…MCKK), 365 to 387 (VMTH…YAKC), 388 to 411 (KTLI…IWGL), 413 to 435 (NLQF…IGNA), 436 to 459 (KSLG…ISGA), 461 to 482 (SLVS…SFGK), 483 to 508 (LKEL…GLCT), 510 to 531 (LVDL…LGSL), 532 to 554 (KLLN…GLSA), and 555 to 578 (LKLS…LVSG). Residues asparagine 109, asparagine 135, asparagine 155, asparagine 195, and asparagine 206 are each glycosylated (N-linked (GlcNAc...) asparagine). Asparagine 267 and asparagine 278 each carry an N-linked (GlcNAc...) asparagine glycan. Residues asparagine 397 and asparagine 427 are each glycosylated (N-linked (GlcNAc...) asparagine). Asparagine 495 carries N-linked (GlcNAc...) asparagine glycosylation. An N-linked (GlcNAc...) asparagine glycan is attached at asparagine 538. Residues 617–637 (CFIVAAILALFFLFSYVIFKI) traverse the membrane as a helical segment. The Cytoplasmic segment spans residues 638–991 (RRDKLNKTVQ…SANDEITKVV (354 aa)). The 300-residue stretch at 671–970 (IKSENIIGRG…SMLEKIEPSY (300 aa)) folds into the Protein kinase domain. ATP is bound by residues 677–685 (IGRGGQGNV) and lysine 699. Phosphotyrosine occurs at positions 762 and 801. Catalysis depends on aspartate 814, which acts as the Proton acceptor. Phosphotyrosine is present on residues tyrosine 859 and tyrosine 866. Residue threonine 867 is modified to Phosphothreonine. The segment at 972-991 (KNSGEASYGESANDEITKVV) is disordered.

This sequence belongs to the protein kinase superfamily. Ser/Thr protein kinase family. As to expression, expressed in the endosperm of fertilized ovules.

Its subcellular location is the membrane. It carries out the reaction L-seryl-[protein] + ATP = O-phospho-L-seryl-[protein] + ADP + H(+). The catalysed reaction is L-threonyl-[protein] + ATP = O-phospho-L-threonyl-[protein] + ADP + H(+). Modulates the seed size by negatively regulating the cellularization of syncytial endosperm. This chain is Receptor-like protein kinase HAIKU2 (IKU2), found in Arabidopsis thaliana (Mouse-ear cress).